Consider the following 402-residue polypeptide: 1-deoxy-D-xylulose 5-phosphate reductoisomerase (402 aa).

NADPH contacts are provided by Thr21, Gly22, Ser23, Ile24, Gly47, Asn50, and Asn127. Lys128 serves as a coordination point for 1-deoxy-D-xylulose 5-phosphate. An NADPH-binding site is contributed by Glu129. Asp151 contributes to the Mn(2+) binding site. 1-deoxy-D-xylulose 5-phosphate contacts are provided by Ser152, Glu153, Ser177, and His200. Residue Glu153 coordinates Mn(2+). Gly206 contributes to the NADPH binding site. 4 residues coordinate 1-deoxy-D-xylulose 5-phosphate: Ser213, Asn218, Lys219, and Glu222. A Mn(2+)-binding site is contributed by Glu222.

It belongs to the DXR family. Mg(2+) serves as cofactor. It depends on Mn(2+) as a cofactor.

It catalyses the reaction 2-C-methyl-D-erythritol 4-phosphate + NADP(+) = 1-deoxy-D-xylulose 5-phosphate + NADPH + H(+). It functions in the pathway isoprenoid biosynthesis; isopentenyl diphosphate biosynthesis via DXP pathway; isopentenyl diphosphate from 1-deoxy-D-xylulose 5-phosphate: step 1/6. Catalyzes the NADPH-dependent rearrangement and reduction of 1-deoxy-D-xylulose-5-phosphate (DXP) to 2-C-methyl-D-erythritol 4-phosphate (MEP). The chain is 1-deoxy-D-xylulose 5-phosphate reductoisomerase from Mycobacterium marinum (strain ATCC BAA-535 / M).